Here is a 510-residue protein sequence, read N- to C-terminus: NAD(P)H-quinone oxidoreductase subunit 2 A, chloroplastic (510 aa).

The next 13 membrane-spanning stretches (helical) occupy residues 26–46, 57–77, 99–119, 124–144, 149–169, 183–203, 227–247, 295–315, 323–342, 354–374, 395–415, 418–438, and 484–504; these read LFDG…ILLL, IPWF…ALLF, IFQF…VEYI, MAIT…MFLC, LITI…LSGY, YLLM…WLYG, PGIS…LSPA, WHPL…LIAI, MLAY…IIVG, YMLF…LFGL, ALSL…AGFF, LHLF…IGLF, and MIVC…IIAI.

The protein belongs to the complex I subunit 2 family. NDH is composed of at least 16 different subunits, 5 of which are encoded in the nucleus.

It localises to the plastid. It is found in the chloroplast thylakoid membrane. It catalyses the reaction a plastoquinone + NADH + (n+1) H(+)(in) = a plastoquinol + NAD(+) + n H(+)(out). The enzyme catalyses a plastoquinone + NADPH + (n+1) H(+)(in) = a plastoquinol + NADP(+) + n H(+)(out). In terms of biological role, NDH shuttles electrons from NAD(P)H:plastoquinone, via FMN and iron-sulfur (Fe-S) centers, to quinones in the photosynthetic chain and possibly in a chloroplast respiratory chain. The immediate electron acceptor for the enzyme in this species is believed to be plastoquinone. Couples the redox reaction to proton translocation, and thus conserves the redox energy in a proton gradient. In Oenothera biennis (German evening primrose), this protein is NAD(P)H-quinone oxidoreductase subunit 2 A, chloroplastic.